Here is a 151-residue protein sequence, read N- to C-terminus: Deoxyuridine 5'-triphosphate nucleotidohydrolase (151 aa).

Residues 70-72 (RSG), N83, and 87-89 (LID) contribute to the substrate site.

It belongs to the dUTPase family. Mg(2+) serves as cofactor.

The enzyme catalyses dUTP + H2O = dUMP + diphosphate + H(+). It participates in pyrimidine metabolism; dUMP biosynthesis; dUMP from dCTP (dUTP route): step 2/2. This enzyme is involved in nucleotide metabolism: it produces dUMP, the immediate precursor of thymidine nucleotides and it decreases the intracellular concentration of dUTP so that uracil cannot be incorporated into DNA. This is Deoxyuridine 5'-triphosphate nucleotidohydrolase from Methylococcus capsulatus (strain ATCC 33009 / NCIMB 11132 / Bath).